The following is a 166-amino-acid chain: Transcription antitermination protein NusB (166 aa).

Positions 1–18 (MISDESDRFNPRDPKPAD) are enriched in basic and acidic residues. A disordered region spans residues 1-30 (MISDESDRFNPRDPKPADAGKPSKSAKRRE).

This sequence belongs to the NusB family.

Involved in transcription antitermination. Required for transcription of ribosomal RNA (rRNA) genes. Binds specifically to the boxA antiterminator sequence of the ribosomal RNA (rrn) operons. The chain is Transcription antitermination protein NusB from Pseudomonas fluorescens (strain Pf0-1).